We begin with the raw amino-acid sequence, 223 residues long: Ubiquitin-conjugating enzyme E2 S-A (223 aa).

A UBC core domain is found at 11 to 157 (HIIRLVYKEV…ARLLTEIHGG (147 aa)). Cys95 functions as the Glycyl thioester intermediate in the catalytic mechanism. A disordered region spans residues 170 to 223 (QDLASGASASSADPMIPGVLGGAEGPMAKKHAGERDKKLAAKKKLDKKRALRRL). A compositionally biased stretch (basic residues) spans 209–223 (AAKKKLDKKRALRRL).

This sequence belongs to the ubiquitin-conjugating enzyme family.

It carries out the reaction S-ubiquitinyl-[E1 ubiquitin-activating enzyme]-L-cysteine + [E2 ubiquitin-conjugating enzyme]-L-cysteine = [E1 ubiquitin-activating enzyme]-L-cysteine + S-ubiquitinyl-[E2 ubiquitin-conjugating enzyme]-L-cysteine.. Its pathway is protein modification; protein ubiquitination. Functionally, catalyzes the covalent attachment of ubiquitin to other proteins. Acts as an essential factor of the anaphase promoting complex/cyclosome (APC/C), a cell cycle-regulated ubiquitin ligase that controls progression through mitosis. Acts by specifically elongating 'Lys-11'-linked polyubiquitin chains initiated by the E2 enzyme ube2c/ubch10 on APC/C substrates, enhancing the degradation of APC/C substrates by the proteasome and promoting mitotic exit. The sequence is that of Ubiquitin-conjugating enzyme E2 S-A (ube2s-a) from Xenopus laevis (African clawed frog).